Here is a 587-residue protein sequence, read N- to C-terminus: RuBisCO large subunit-binding protein subunit alpha, chloroplastic (587 aa).

Polar residues predominate over residues 1-25 (MASTNALSSTSILRSPTNQAQTSLS). Residues 1-33 (MASTNALSSTSILRSPTNQAQTSLSKKVKQHGR) form a disordered region. The N-terminal 47 residues, 1–47 (MASTNALSSTSILRSPTNQAQTSLSKKVKQHGRVNFRQKPNRFVVKA), are a transit peptide targeting the chloroplast.

Belongs to the chaperonin (HSP60) family. Oligomer of probably six alpha and six beta subunits.

The protein localises to the plastid. It localises to the chloroplast. Functionally, this protein binds RuBisCO small and large subunits and is implicated in the assembly of the enzyme oligomer. The sequence is that of RuBisCO large subunit-binding protein subunit alpha, chloroplastic from Pisum sativum (Garden pea).